The sequence spans 359 residues: Transcription factor bHLH130 (359 aa).

Phosphoserine is present on Ser60. The interval 161-186 is disordered; that stretch reads EEDEESPSNSNGLRRHCSLSSRPPSS. Over residues 167–184 the composition is skewed to polar residues; that stretch reads PSNSNGLRRHCSLSSRPP. Positions 285 to 335 constitute a bHLH domain; it reads CATHPRSIAERVRRTRISERMRKLQELVPNMDKQTNTSDMLDLAVDYIKDL.

As to quaternary structure, homodimer.

It localises to the nucleus. The protein is Transcription factor bHLH130 (BHLH130) of Arabidopsis thaliana (Mouse-ear cress).